The following is a 229-amino-acid chain: MEQEVYTALTFVELTTVHYQHDDPFGLFNAYVTLIPIAIAIGVITLILFRRDVRTISIFLGLLFSECTNYVLKKSIKEHRPTMWKELRKQSYGMPSSHSQFMFFFAVLMTLFYLKKRIRFGSKILPIISVTFLFFLAAGVAYSRVHLYYHTAKQVFCGSFIGICLGFIWYGVIEYIFRPYLFPIIINHPIGKYFYLRDSSEIEDLLNFEYTNVMNKVKTINKTKPIKTK.

A run of 4 helical transmembrane segments spans residues 27–47 (LFNA…ITLI), 94–114 (MPSS…LFYL), 120–140 (FGSK…AAGV), and 156–176 (FCGS…IEYI).

It belongs to the dolichyldiphosphatase family.

It localises to the endoplasmic reticulum membrane. It catalyses the reaction a di-trans,poly-cis-dolichyl diphosphate + H2O = a di-trans,poly-cis-dolichyl phosphate + phosphate + H(+). It functions in the pathway protein modification; protein glycosylation. Its function is as follows. Required for efficient N-glycosylation. Necessary for maintaining optimal levels of dolichol-linked oligosaccharides. Hydrolyzes dolichyl pyrophosphate at a very high rate and dolichyl monophosphate at a much lower rate. Does not act on phosphatidate. The sequence is that of Dolichyldiphosphatase 1 (dolpp1) from Dictyostelium discoideum (Social amoeba).